Here is a 246-residue protein sequence, read N- to C-terminus: MLVLFVATWSDLGLCKKRPKPGGWNTGGSRYPGQGSPGGNRYPPQGGGGWGQPHGGGWGQPHGGGWGQPHGGGWGQPHGGGWGQGGGTHNQWHKPSKPKTSMKHMAGAAAAGAVVGGLGGYMLGSAMSRPLIHFGNEYEDRYYRENMYRYPNQVYYRPVDQYSNQNNFVHDCVNITIKQHTVTTTTKGENFTETDVKMMERVVEQMCITQYEKESQAYYQRGSSMVLFSSPPVILLISFLIFLIVG.

Positions 1-15 are cleaved as a signal peptide; the sequence is MLVLFVATWSDLGLC. An interaction with GRB2, ERI3 and SYN1 region spans residues 16–223; it reads KKRPKPGGWN…ESQAYYQRGS (208 aa). The segment at 18-102 is disordered; sequence RPKPGGWNTG…HKPSKPKTSM (85 aa). 5 repeat units span residues 44–52, 53–60, 61–68, 69–76, and 77–84. The interval 44 to 84 is 5 X 8 AA tandem repeats of P-H-G-G-G-W-G-Q; that stretch reads PQGGGGWGQPHGGGWGQPHGGGWGQPHGGGWGQPHGGGWGQ. The segment covering 45–88 has biased composition (gly residues); sequence QGGGGWGQPHGGGWGQPHGGGWGQPHGGGWGQPHGGGWGQGGGT. Residues His-54, Gly-55, Gly-56, His-62, Gly-63, Gly-64, His-70, Gly-71, Gly-72, His-78, Gly-79, and Gly-80 each contribute to the Cu(2+) site. Residues 91 to 102 are compositionally biased toward basic residues; the sequence is QWHKPSKPKTSM. Residues Cys-172 and Cys-207 are joined by a disulfide bond. N-linked (GlcNAc...) asparagine glycosylation is found at Asn-174 and Asn-190. A lipid anchor (GPI-anchor amidated serine) is attached at Ser-223. A propeptide spans 224–246 (removed in mature form); that stretch reads SMVLFSSPPVILLISFLIFLIVG.

This sequence belongs to the prion family. In terms of assembly, monomer and homodimer. Has a tendency to aggregate into amyloid fibrils containing a cross-beta spine, formed by a steric zipper of superposed beta-strands. Soluble oligomers may represent an intermediate stage on the path to fibril formation. Copper binding may promote oligomerization. Interacts with GRB2, APP, ERI3/PRNPIP and SYN1. Mislocalized cytosolically exposed PrP interacts with MGRN1; this interaction alters MGRN1 subcellular location and causes lysosomal enlargement. Interacts with KIAA1191.

Its subcellular location is the cell membrane. It is found in the golgi apparatus. Functionally, its primary physiological function is unclear. Has cytoprotective activity against internal or environmental stresses. May play a role in neuronal development and synaptic plasticity. May be required for neuronal myelin sheath maintenance. May play a role in iron uptake and iron homeostasis. Soluble oligomers are toxic to cultured neuroblastoma cells and induce apoptosis (in vitro). Association with GPC1 (via its heparan sulfate chains) targets PRNP to lipid rafts. Also provides Cu(2+) or Zn(2+) for the ascorbate-mediated GPC1 deaminase degradation of its heparan sulfate side chains. In Cercocebus atys (Sooty mangabey), this protein is Major prion protein (PRNP).